A 186-amino-acid polypeptide reads, in one-letter code: Glutathione peroxidase 7 (186 aa).

The first 18 residues, 1–18, serve as a signal peptide directing secretion; that stretch reads MVAARAAAWLLLAAAACA. Cys-56 is a catalytic residue.

It belongs to the glutathione peroxidase family.

It is found in the secreted. It catalyses the reaction 2 glutathione + H2O2 = glutathione disulfide + 2 H2O. The polypeptide is Glutathione peroxidase 7 (GPX7) (Bos taurus (Bovine)).